The sequence spans 897 residues: Leucine--tRNA ligase (897 aa).

The 'HIGH' region motif lies at Pro-49–His-59. The short motif at Lys-654–Ser-658 is the 'KMSKS' region element. ATP is bound at residue Lys-657.

The protein belongs to the class-I aminoacyl-tRNA synthetase family.

It localises to the cytoplasm. It carries out the reaction tRNA(Leu) + L-leucine + ATP = L-leucyl-tRNA(Leu) + AMP + diphosphate. This Methylibium petroleiphilum (strain ATCC BAA-1232 / LMG 22953 / PM1) protein is Leucine--tRNA ligase.